The primary structure comprises 507 residues: Ribose import ATP-binding protein RbsA (507 aa).

ABC transporter domains follow at residues 7–242 (LEMR…VGRP) and 253–497 (IPLG…TGVT). Residue 39-46 (GENGAGKS) coordinates ATP.

It belongs to the ABC transporter superfamily. Ribose importer (TC 3.A.1.2.1) family. In terms of assembly, the complex is composed of an ATP-binding protein (RbsA), two transmembrane proteins (RbsC) and a solute-binding protein (RbsB).

It localises to the cell inner membrane. It carries out the reaction D-ribose(out) + ATP + H2O = D-ribose(in) + ADP + phosphate + H(+). In terms of biological role, part of the ABC transporter complex RbsABC involved in ribose import. Responsible for energy coupling to the transport system. This chain is Ribose import ATP-binding protein RbsA, found in Yersinia pestis bv. Antiqua (strain Antiqua).